The sequence spans 265 residues: 3-methyl-2-oxobutanoate hydroxymethyltransferase (265 aa).

Positions 45 and 84 each coordinate Mg(2+). Residues 45–46, Asp84, and Lys112 each bind 3-methyl-2-oxobutanoate; that span reads DS. Glu114 provides a ligand contact to Mg(2+). Glu181 acts as the Proton acceptor in catalysis.

Belongs to the PanB family. In terms of assembly, homodecamer; pentamer of dimers. Mg(2+) is required as a cofactor.

It localises to the cytoplasm. The enzyme catalyses 3-methyl-2-oxobutanoate + (6R)-5,10-methylene-5,6,7,8-tetrahydrofolate + H2O = 2-dehydropantoate + (6S)-5,6,7,8-tetrahydrofolate. Its pathway is cofactor biosynthesis; (R)-pantothenate biosynthesis; (R)-pantoate from 3-methyl-2-oxobutanoate: step 1/2. Catalyzes the reversible reaction in which hydroxymethyl group from 5,10-methylenetetrahydrofolate is transferred onto alpha-ketoisovalerate to form ketopantoate. This chain is 3-methyl-2-oxobutanoate hydroxymethyltransferase, found in Pectobacterium carotovorum subsp. carotovorum (strain PC1).